A 731-amino-acid chain; its full sequence is Anaphase-promoting complex subunit 2 (731 aa).

This sequence belongs to the cullin family. The APC/C is probably composed of at least 12 subunits: apc-2, apc-10, apc-11, cdc-26, emb-1, emb-27, emb-30, mat-1, mat-2, mat-3, such-1 and gfi-3.

It functions in the pathway protein modification; protein ubiquitination. Functionally, probable component of the anaphase promoting complex/cyclosome (APC/C), a cell cycle-regulated ubiquitin ligase that controls progression through mitosis and the G1 phase of the cell cycle. The APC/C complex acts by mediating ubiquitination and subsequent degradation of target proteins. Developmental role in early embryogenesis and the metaphase to anaphase transition in meiosis and mitosis. This is Anaphase-promoting complex subunit 2 from Caenorhabditis elegans.